A 460-amino-acid chain; its full sequence is Putative protein MSS51 homolog, mitochondrial (460 aa).

8 residues coordinate Zn(2+): Cys-105, Cys-108, Cys-124, Cys-127, Cys-133, Cys-137, His-145, and Cys-149. The MYND-type zinc finger occupies 105-149; that stretch reads CAHCRALPSGLSDSKVLRHCKRCRNVYYCGPECQKSDWPAHRRVC.

This Homo sapiens (Human) protein is Putative protein MSS51 homolog, mitochondrial (MSS51).